The following is a 177-amino-acid chain: Large ribosomal subunit protein uL6 (177 aa).

This sequence belongs to the universal ribosomal protein uL6 family. Part of the 50S ribosomal subunit.

Functionally, this protein binds to the 23S rRNA, and is important in its secondary structure. It is located near the subunit interface in the base of the L7/L12 stalk, and near the tRNA binding site of the peptidyltransferase center. This is Large ribosomal subunit protein uL6 from Mannheimia succiniciproducens (strain KCTC 0769BP / MBEL55E).